A 724-amino-acid chain; its full sequence is Catalase-peroxidase (724 aa).

Positions 1–26 are disordered; sequence MDENKTKPTGKCPVMHGGNTSTGSSN. The segment at residues 98 to 225 is a cross-link (tryptophyl-tyrosyl-methioninium (Trp-Tyr) (with M-251)); it reads WHSAGSYRTT…LAAVQMGLIY (128 aa). Catalysis depends on H99, which acts as the Proton acceptor. Residues 225-251 constitute a cross-link (tryptophyl-tyrosyl-methioninium (Tyr-Met) (with W-98)); sequence YVNPEGVDGKSDPLRTAQDMRVTFSRM. H266 serves as a coordination point for heme b.

It belongs to the peroxidase family. Peroxidase/catalase subfamily. Homodimer or homotetramer. Requires heme b as cofactor. Post-translationally, formation of the three residue Trp-Tyr-Met cross-link is important for the catalase, but not the peroxidase activity of the enzyme.

It catalyses the reaction H2O2 + AH2 = A + 2 H2O. The catalysed reaction is 2 H2O2 = O2 + 2 H2O. Functionally, bifunctional enzyme with both catalase and broad-spectrum peroxidase activity. The polypeptide is Catalase-peroxidase (Pectobacterium atrosepticum (strain SCRI 1043 / ATCC BAA-672) (Erwinia carotovora subsp. atroseptica)).